Consider the following 225-residue polypeptide: NAD(P)H-quinone oxidoreductase subunit K, chloroplastic (225 aa).

[4Fe-4S] cluster is bound by residues cysteine 43, cysteine 44, cysteine 108, and cysteine 139.

The protein belongs to the complex I 20 kDa subunit family. NDH is composed of at least 16 different subunits, 5 of which are encoded in the nucleus. [4Fe-4S] cluster is required as a cofactor.

The protein localises to the plastid. The protein resides in the chloroplast thylakoid membrane. It carries out the reaction a plastoquinone + NADH + (n+1) H(+)(in) = a plastoquinol + NAD(+) + n H(+)(out). The catalysed reaction is a plastoquinone + NADPH + (n+1) H(+)(in) = a plastoquinol + NADP(+) + n H(+)(out). NDH shuttles electrons from NAD(P)H:plastoquinone, via FMN and iron-sulfur (Fe-S) centers, to quinones in the photosynthetic chain and possibly in a chloroplast respiratory chain. The immediate electron acceptor for the enzyme in this species is believed to be plastoquinone. Couples the redox reaction to proton translocation, and thus conserves the redox energy in a proton gradient. This is NAD(P)H-quinone oxidoreductase subunit K, chloroplastic from Manihot esculenta (Cassava).